The chain runs to 363 residues: Zinc finger CCCH domain-containing protein 53 (363 aa).

The C3H1-type zinc finger occupies 154 to 181 (KNRPKICSFYTIGQCKRGAECSFRHEMP). In terms of domain architecture, RRM spans 225–310 (KTLYVGGLNS…PPNEYSHYPS (86 aa)). The segment at 281-348 (LISQQQNQHS…SYSYPMPPHQ (68 aa)) is disordered. Low complexity predominate over residues 283–297 (SQQQNQHSQMQQYYM). The segment covering 320-336 (FSTQESDGSSTSENNRA) has biased composition (polar residues).

The sequence is that of Zinc finger CCCH domain-containing protein 53 from Arabidopsis thaliana (Mouse-ear cress).